The sequence spans 208 residues: Protein GrpE (208 aa).

Positions 1–62 (MTEKDESVKS…ETAVDPKDEE (62 aa)) are disordered. Residues 46–55 (SNEESSEETA) show a composition bias toward acidic residues.

The protein belongs to the GrpE family. As to quaternary structure, homodimer.

The protein resides in the cytoplasm. Participates actively in the response to hyperosmotic and heat shock by preventing the aggregation of stress-denatured proteins, in association with DnaK and GrpE. It is the nucleotide exchange factor for DnaK and may function as a thermosensor. Unfolded proteins bind initially to DnaJ; upon interaction with the DnaJ-bound protein, DnaK hydrolyzes its bound ATP, resulting in the formation of a stable complex. GrpE releases ADP from DnaK; ATP binding to DnaK triggers the release of the substrate protein, thus completing the reaction cycle. Several rounds of ATP-dependent interactions between DnaJ, DnaK and GrpE are required for fully efficient folding. In Staphylococcus haemolyticus (strain JCSC1435), this protein is Protein GrpE.